A 411-amino-acid polypeptide reads, in one-letter code: Replication factor C subunit 2 (411 aa).

The tract at residues 1–36 is disordered; sequence MADFFNLKARQQAAAQASSSKTPTSKQESNRLQPWV. Residues 11-27 are compositionally biased toward low complexity; the sequence is QQAAAQASSSKTPTSKQ. ATP-binding positions include valine 36, arginine 40, 73-81, asparagine 195, and arginine 253; that span reads GPPGTGKTS.

It belongs to the activator 1 small subunits family. As to quaternary structure, heteropentamer of subunits RFC1, RFC2, RFC3, RFC4 and RFC5 that forms a complex with PCNA in the presence of ATP.

The protein resides in the nucleus. The elongation of primed DNA templates by DNA polymerase delta and epsilon requires the action of the accessory proteins proliferating cell nuclear antigen (PCNA) and activator 1. Subunit 2 binds ATP and single-stranded DNA. This Phaeosphaeria nodorum (strain SN15 / ATCC MYA-4574 / FGSC 10173) (Glume blotch fungus) protein is Replication factor C subunit 2 (RFC2).